The sequence spans 126 residues: uncharacterized protein (126 aa).

One can recognise a VOC domain in the interval 4–126; the sequence is RIDHTGIMVR…DGEWIEFFQR (123 aa). A divalent metal cation is bound by residues His7, Glu42, His74, and Glu122.

It belongs to the glyoxalase I family.

This is an uncharacterized protein from Bacillus subtilis (strain 168).